The following is a 262-amino-acid chain: tRNA pseudouridine synthase A (262 aa).

Catalysis depends on Asp-52, which acts as the Nucleophile. Tyr-110 contributes to the substrate binding site.

Belongs to the tRNA pseudouridine synthase TruA family. In terms of assembly, homodimer.

The catalysed reaction is uridine(38/39/40) in tRNA = pseudouridine(38/39/40) in tRNA. Functionally, formation of pseudouridine at positions 38, 39 and 40 in the anticodon stem and loop of transfer RNAs. This Hydrogenovibrio crunogenus (strain DSM 25203 / XCL-2) (Thiomicrospira crunogena) protein is tRNA pseudouridine synthase A.